The sequence spans 332 residues: 5-dehydro-2-deoxygluconokinase 1 (332 aa).

Belongs to the carbohydrate kinase PfkB family.

The enzyme catalyses 5-dehydro-2-deoxy-D-gluconate + ATP = 6-phospho-5-dehydro-2-deoxy-D-gluconate + ADP + H(+). The protein operates within polyol metabolism; myo-inositol degradation into acetyl-CoA; acetyl-CoA from myo-inositol: step 5/7. Catalyzes the phosphorylation of 5-dehydro-2-deoxy-D-gluconate (2-deoxy-5-keto-D-gluconate or DKG) to 6-phospho-5-dehydro-2-deoxy-D-gluconate (DKGP). In Bacillus cereus (strain ZK / E33L), this protein is 5-dehydro-2-deoxygluconokinase 1.